Here is a 65-residue protein sequence, read N- to C-terminus: Large ribosomal subunit protein bL35 (65 aa).

This sequence belongs to the bacterial ribosomal protein bL35 family.

The polypeptide is Large ribosomal subunit protein bL35 (Yersinia pseudotuberculosis serotype O:1b (strain IP 31758)).